A 307-amino-acid polypeptide reads, in one-letter code: Elongation factor Ts (307 aa).

Residues 79 to 82 (TDFV) are involved in Mg(2+) ion dislocation from EF-Tu.

Belongs to the EF-Ts family.

The protein localises to the cytoplasm. Its function is as follows. Associates with the EF-Tu.GDP complex and induces the exchange of GDP to GTP. It remains bound to the aminoacyl-tRNA.EF-Tu.GTP complex up to the GTP hydrolysis stage on the ribosome. This is Elongation factor Ts from Rhizobium meliloti (strain 1021) (Ensifer meliloti).